The chain runs to 211 residues: Ras-related protein RABB1b (211 aa).

GTP is bound at residue 13-20 (GDTGVGKS). The Effector region motif lies at 35–43 (HDLTIGVEF). Residues 61 to 65 (DTAGQ), 119 to 122 (NKCD), and 149 to 150 (SA) contribute to the GTP site. Residues cysteine 209 and cysteine 210 are each lipidated (S-geranylgeranyl cysteine).

This sequence belongs to the small GTPase superfamily. Rab family.

It is found in the cell membrane. Intracellular vesicle trafficking and protein transport. In Arabidopsis thaliana (Mouse-ear cress), this protein is Ras-related protein RABB1b (RABB1B).